Reading from the N-terminus, the 320-residue chain is 4-diphosphocytidyl-2-C-methyl-D-erythritol kinase (320 aa).

Lys20 is a catalytic residue. 112–122 (PVAGGMGGGSA) is an ATP binding site. Asp154 is a catalytic residue.

The protein belongs to the GHMP kinase family. IspE subfamily.

The catalysed reaction is 4-CDP-2-C-methyl-D-erythritol + ATP = 4-CDP-2-C-methyl-D-erythritol 2-phosphate + ADP + H(+). It participates in isoprenoid biosynthesis; isopentenyl diphosphate biosynthesis via DXP pathway; isopentenyl diphosphate from 1-deoxy-D-xylulose 5-phosphate: step 3/6. In terms of biological role, catalyzes the phosphorylation of the position 2 hydroxy group of 4-diphosphocytidyl-2C-methyl-D-erythritol. The chain is 4-diphosphocytidyl-2-C-methyl-D-erythritol kinase from Arthrobacter sp. (strain FB24).